The chain runs to 237 residues: Probable transcriptional regulatory protein Bpro_2928 (237 aa).

Belongs to the TACO1 family.

The protein localises to the cytoplasm. In Polaromonas sp. (strain JS666 / ATCC BAA-500), this protein is Probable transcriptional regulatory protein Bpro_2928.